Reading from the N-terminus, the 77-residue chain is uncharacterized protein (77 aa).

This is an uncharacterized protein from Saccharomyces cerevisiae (strain ATCC 204508 / S288c) (Baker's yeast).